A 904-amino-acid chain; its full sequence is Alanine--tRNA ligase (904 aa).

The Zn(2+) site is built by H600, H604, C704, and H708.

It belongs to the class-II aminoacyl-tRNA synthetase family. The cofactor is Zn(2+).

The protein localises to the cytoplasm. It carries out the reaction tRNA(Ala) + L-alanine + ATP = L-alanyl-tRNA(Ala) + AMP + diphosphate. Catalyzes the attachment of alanine to tRNA(Ala) in a two-step reaction: alanine is first activated by ATP to form Ala-AMP and then transferred to the acceptor end of tRNA(Ala). Also edits incorrectly charged Ser-tRNA(Ala) and Gly-tRNA(Ala) via its editing domain. The polypeptide is Alanine--tRNA ligase (Metallosphaera sedula (strain ATCC 51363 / DSM 5348 / JCM 9185 / NBRC 15509 / TH2)).